The primary structure comprises 295 residues: Polyprenyl transferase dpmaC (295 aa).

The next 8 helical transmembrane spans lie at 39–59 (LFCV…NDWI), 84–104 (QAFV…HVML), 109–124 (VHVI…YPFL), 131–151 (KLHI…AIPG), 168–188 (YCLP…TAYS), 213–233 (LVLV…LTQF), 237–257 (WLWV…LALF), and 271–291 (SNFV…LLKA).

This sequence belongs to the UbiA prenyltransferase family. The cofactor is Mg(2+).

The protein localises to the membrane. It participates in secondary metabolite biosynthesis; terpenoid biosynthesis. Functionally, polyprenyl transferase; part of the gene cluster that mediates the biosynthesis of the diterpenoid pyrones subglutinols A and B. The first step of the pathway is the synthesis of the alpha-pyrone moiety by the polyketide synthase dpmaA via condensation of one acetyl-CoA starter unit with 3 malonyl-CoA units and 2 methylations. The alpha-pyrone is then combined with geranylgeranyl pyrophosphate (GGPP) formed by the GGPP synthase dpmaD through the action of the prenyltransferase dpmaC to yield a linear alpha-pyrone diterpenoid. Subsequent steps in the diterpenoid pyrone biosynthetic pathway involve the decalin core formation, which is initiated by the epoxidation of the C10-C11 olefin by the FAD-dependent oxidoreductase dpmaE, and is followed by a cyclization cascade catalyzed by the terpene cyclase dpmaB. The dehydrogenase dpmaF is then involved in tetrahydrofuran (THF) ring formation at the C5 unit to complete the formation of subglutinols A and B. The polypeptide is Polyprenyl transferase dpmaC (Metarhizium anisopliae (Entomophthora anisopliae)).